The chain runs to 130 residues: MAATQYYGTGRRKTSTARVFAKAGSGNIVVNQRPLDQYFGRETARMVVRQPLELVEMTDKLDIYVTVKGGGITGQAGAIRHGITRALMQLDEALRPSLRSAGFVTRDARKVERKKVGLRKARRKPQFSKR.

This sequence belongs to the universal ribosomal protein uS9 family.

The polypeptide is Small ribosomal subunit protein uS9 (Shewanella baltica (strain OS155 / ATCC BAA-1091)).